Consider the following 101-residue polypeptide: UPF0473 protein STER_1939 (101 aa).

The protein belongs to the UPF0473 family.

In Streptococcus thermophilus (strain ATCC BAA-491 / LMD-9), this protein is UPF0473 protein STER_1939.